Reading from the N-terminus, the 216-residue chain is uncharacterized protein (216 aa).

The 162-residue stretch at 54 to 215 folds into the Integrase catalytic domain; it reads TATQPNEKWT…SPVNYRTQSL (162 aa).

This sequence belongs to the transposase IS3/IS150/IS904 family.

This is an uncharacterized protein from Haemophilus influenzae (strain ATCC 51907 / DSM 11121 / KW20 / Rd).